Reading from the N-terminus, the 337-residue chain is Putative F-box protein At4g09870 (337 aa).

The 46-residue stretch at 1-46 folds into the F-box domain; it reads MSISELSQDLLEEILCRVPAISLKKLRSTCKLWNSLFIDKRVRNEL.

The chain is Putative F-box protein At4g09870 from Arabidopsis thaliana (Mouse-ear cress).